The primary structure comprises 385 residues: 4-hydroxy-3-methylbut-2-en-1-yl diphosphate synthase (flavodoxin) (385 aa).

Residues Cys280, Cys283, Cys315, and Glu322 each coordinate [4Fe-4S] cluster.

Belongs to the IspG family. It depends on [4Fe-4S] cluster as a cofactor.

It carries out the reaction (2E)-4-hydroxy-3-methylbut-2-enyl diphosphate + oxidized [flavodoxin] + H2O + 2 H(+) = 2-C-methyl-D-erythritol 2,4-cyclic diphosphate + reduced [flavodoxin]. Its pathway is isoprenoid biosynthesis; isopentenyl diphosphate biosynthesis via DXP pathway; isopentenyl diphosphate from 1-deoxy-D-xylulose 5-phosphate: step 5/6. Its function is as follows. Converts 2C-methyl-D-erythritol 2,4-cyclodiphosphate (ME-2,4cPP) into 1-hydroxy-2-methyl-2-(E)-butenyl 4-diphosphate. This is 4-hydroxy-3-methylbut-2-en-1-yl diphosphate synthase (flavodoxin) from Streptomyces griseus subsp. griseus (strain JCM 4626 / CBS 651.72 / NBRC 13350 / KCC S-0626 / ISP 5235).